We begin with the raw amino-acid sequence, 299 residues long: Diaminopimelate epimerase (299 aa).

Substrate is bound by residues asparagine 11 and asparagine 63. Cysteine 72 (proton donor) is an active-site residue. Residues 73 to 74 (GN), asparagine 211, and 229 to 230 (ER) contribute to the substrate site. Cysteine 238 acts as the Proton acceptor in catalysis. Residue 239 to 240 (GT) coordinates substrate.

It belongs to the diaminopimelate epimerase family. As to quaternary structure, homodimer.

Its subcellular location is the cytoplasm. It carries out the reaction (2S,6S)-2,6-diaminopimelate = meso-2,6-diaminopimelate. The protein operates within amino-acid biosynthesis; L-lysine biosynthesis via DAP pathway; DL-2,6-diaminopimelate from LL-2,6-diaminopimelate: step 1/1. Catalyzes the stereoinversion of LL-2,6-diaminopimelate (L,L-DAP) to meso-diaminopimelate (meso-DAP), a precursor of L-lysine and an essential component of the bacterial peptidoglycan. The protein is Diaminopimelate epimerase of Natranaerobius thermophilus (strain ATCC BAA-1301 / DSM 18059 / JW/NM-WN-LF).